Consider the following 322-residue polypeptide: tRNA U34 carboxymethyltransferase (322 aa).

Carboxy-S-adenosyl-L-methionine-binding positions include Lys90, Trp104, Lys109, Gly129, 151 to 153 (DPT), 180 to 181 (IE), Met195, Tyr199, and Arg314.

Belongs to the class I-like SAM-binding methyltransferase superfamily. CmoB family. In terms of assembly, homotetramer.

The catalysed reaction is carboxy-S-adenosyl-L-methionine + 5-hydroxyuridine(34) in tRNA = 5-carboxymethoxyuridine(34) in tRNA + S-adenosyl-L-homocysteine + H(+). In terms of biological role, catalyzes carboxymethyl transfer from carboxy-S-adenosyl-L-methionine (Cx-SAM) to 5-hydroxyuridine (ho5U) to form 5-carboxymethoxyuridine (cmo5U) at position 34 in tRNAs. In Citrobacter koseri (strain ATCC BAA-895 / CDC 4225-83 / SGSC4696), this protein is tRNA U34 carboxymethyltransferase.